The following is a 339-amino-acid chain: Probable cytosolic iron-sulfur protein assembly protein CIAO1 (339 aa).

7 WD repeats span residues His-14 to Lys-53, Gly-59 to Val-98, Gly-103 to Cys-142, Ser-148 to Cys-187, Gly-192 to Gly-231, Phe-250 to Gln-289, and Ala-301 to Leu-339. The short motif at Leu-176–Gln-178 is the LYR motif; required for interaction with HSC20 element.

This sequence belongs to the WD repeat CIA1 family. Component of the CIA complex. Interacts with CIAO2A and forms a complex with CIAO2B and MMS19; the interactions with CIAO2A and CIAO2B are mutually exclusive. Interacts with CHD1L, ERCC2, IREB2 and POLD1. Component of the MMXD complex, which includes CIAO1, ERCC2, CIAO2B, MMS19 and SLC25A5. Interacts with WT1. Interacts with CIAO3. Interacts (via LYR motif) with HSC20.

The protein resides in the cytoplasm. Key component of the cytosolic iron-sulfur protein assembly (CIA) complex, a multiprotein complex that mediates the incorporation of iron-sulfur cluster into extramitochondrial Fe/S proteins. As a CIA complex component, interacts specifically with CIAO2A or CIAO2B and MMS19 to assist different branches of iron-sulfur protein assembly, depending of its interactors. The complex CIAO1:CIAO2B:MMS19 binds to and facilitates the assembly of most cytosolic-nuclear Fe/S proteins. CIAO1:CIAO2A specifically matures ACO1 and stabilizes IREB2. Seems to specifically modulate the transactivation activity of WT1. As part of the mitotic spindle-associated MMXD complex it may play a role in chromosome segregation. This Mus musculus (Mouse) protein is Probable cytosolic iron-sulfur protein assembly protein CIAO1.